We begin with the raw amino-acid sequence, 118 residues long: Large ribosomal subunit protein bL20 (118 aa).

Belongs to the bacterial ribosomal protein bL20 family.

Binds directly to 23S ribosomal RNA and is necessary for the in vitro assembly process of the 50S ribosomal subunit. It is not involved in the protein synthesizing functions of that subunit. The chain is Large ribosomal subunit protein bL20 from Lactobacillus johnsonii (strain CNCM I-12250 / La1 / NCC 533).